A 476-amino-acid polypeptide reads, in one-letter code: Eukaryotic translation initiation factor 3 subunit L (476 aa).

The PCI domain maps to Asp257 to Leu452.

The protein belongs to the eIF-3 subunit L family. Component of the eukaryotic translation initiation factor 3 (eIF-3) complex.

It is found in the cytoplasm. Functionally, component of the eukaryotic translation initiation factor 3 (eIF-3) complex, which is involved in protein synthesis of a specialized repertoire of mRNAs and, together with other initiation factors, stimulates binding of mRNA and methionyl-tRNAi to the 40S ribosome. The eIF-3 complex specifically targets and initiates translation of a subset of mRNAs involved in cell proliferation. This Neosartorya fischeri (strain ATCC 1020 / DSM 3700 / CBS 544.65 / FGSC A1164 / JCM 1740 / NRRL 181 / WB 181) (Aspergillus fischerianus) protein is Eukaryotic translation initiation factor 3 subunit L.